Here is a 338-residue protein sequence, read N- to C-terminus: Ferredoxin--NADP reductase (338 aa).

FAD-binding residues include Asp36, Gln44, Tyr49, Val89, Phe123, Asp290, and Thr331.

The protein belongs to the ferredoxin--NADP reductase type 2 family. In terms of assembly, homodimer. FAD is required as a cofactor.

The enzyme catalyses 2 reduced [2Fe-2S]-[ferredoxin] + NADP(+) + H(+) = 2 oxidized [2Fe-2S]-[ferredoxin] + NADPH. This is Ferredoxin--NADP reductase from Anaplasma phagocytophilum (strain HZ).